We begin with the raw amino-acid sequence, 782 residues long: Phosphate transporter PHO1 (782 aa).

Topologically, residues 1–386 are cytoplasmic; that stretch reads MVKFSKELEA…HQTKDSHMVT (386 aa). Positions 2 to 334 constitute an SPX domain; sequence VKFSKELEAQ…GQNASSTYLK (333 aa). Residues 165–202 form a disordered region; sequence KKRNLSGSNSHRSFSSSVRNSDFSAGSPGELSEIQSET. Residues 170–188 are compositionally biased toward low complexity; it reads SGSNSHRSFSSSVRNSDFS. Positions 315–322 are important for inositol polyphosphate binding; that stretch reads KIMKKFDK. The helical transmembrane segment at 387 to 407 threads the bilayer; sequence FFVGLFTGCFISLFVIYIILA. Topologically, residues 408 to 423 are lumenal; that stretch reads HLSGIFTSSDQVSYLE. Residues 424-444 traverse the membrane as a helical segment; sequence TVYPVFSVFALLSLHMFMYGC. The Cytoplasmic segment spans residues 445–473; the sequence is NLYMWKNTRINYTFIFEFAPNTALRYRDA. Residues 474–494 form a helical membrane-spanning segment; sequence FLMGTTFMTSVVAAMVIHLIL. The Lumenal segment spans residues 495–506; sequence RASGFSASQVDT. A helical transmembrane segment spans residues 507–527; sequence IPGILLLIFICVLICPFNTFY. Residues 528–593 lie on the Cytoplasmic side of the membrane; that stretch reads RPTRFCFIRI…THEYNTCKNG (66 aa). An EXS domain is found at 591-782; that stretch reads KNGRYYREFA…LPFLDRDSDG (192 aa). Residues 594–614 form a helical membrane-spanning segment; sequence RYYREFAYLISFLPYFWRAMQ. At 615–619 the chain is on the lumenal side; sequence CVRRW. Residues 620–639 form a helical membrane-spanning segment; it reads WDESNPDHLINMGKYVSAMV. The Cytoplasmic portion of the chain corresponds to 640–782; sequence AAGVRITYAR…LPFLDRDSDG (143 aa).

Belongs to the SYG1 (TC 2.A.94) family. In terms of assembly, interacts with PHO2. PHO1 degradation is PHO2 dependent and involves multivesicular body-mediated vacuolar proteolysis. Predominantly in roots, but also weak expression in the lower part of the hypocotyl. In the stellar cells, including the pericycle and xylem parenchyma cells, but not in the cortical or epidermal cells. Expressed in guard cells.

The protein localises to the golgi apparatus membrane. The protein resides in the golgi apparatus. Its subcellular location is the trans-Golgi network membrane. It localises to the endoplasmic reticulum membrane. In terms of biological role, inositol polyphosphate sensor that associates with transcription factors to regulate inorganic phosphate (Pi) starvation responses. Probably acts by binding inositol polyphosphate via its SPX domain. Acts as a Pi exporter, mediating efflux of Pi out of cells. Transfers Pi from the epidermal and cortical cells to the root xylem vessels. Involved in the transfer of Pi from roots to shoots. Involved in abscisic acid (ABA) induction of stomatal closure and ABA repression of stomatal opening. This Arabidopsis thaliana (Mouse-ear cress) protein is Phosphate transporter PHO1.